The primary structure comprises 317 residues: Pseudouridine-5'-phosphate glycosidase (317 aa).

Residue glutamate 27 is the Proton donor of the active site. 2 residues coordinate substrate: lysine 89 and valine 109. Aspartate 141 contacts Mn(2+). 143 to 145 (SAD) is a binding site for substrate. Lysine 162 (nucleophile) is an active-site residue.

This sequence belongs to the pseudouridine-5'-phosphate glycosidase family. In terms of assembly, homotrimer. Requires Mn(2+) as cofactor.

The enzyme catalyses D-ribose 5-phosphate + uracil = psi-UMP + H2O. In terms of biological role, catalyzes the reversible cleavage of pseudouridine 5'-phosphate (PsiMP) to ribose 5-phosphate and uracil. Functions biologically in the cleavage direction, as part of a pseudouridine degradation pathway. In Sorangium cellulosum (strain So ce56) (Polyangium cellulosum (strain So ce56)), this protein is Pseudouridine-5'-phosphate glycosidase.